Consider the following 403-residue polypeptide: Alkaline protease 1 (403 aa).

A signal peptide spans 1–21 (MLSIKRTLLLLGAVLPAVFGA). A propeptide spanning residues 22-125 (PVQETRRAAQ…QIWYLDALTT (104 aa)) is cleaved from the precursor. In terms of domain architecture, Inhibitor I9 spans 36-120 (KYIVTFKPGT…HVEEDQIWYL (85 aa)). The Peptidase S8 domain maps to 130–403 (PWGLGSISHK…PNKLAYNGNA (274 aa)). Residues Asp-162 and His-193 each act as charge relay system in the active site. N-linked (GlcNAc...) asparagine glycosylation is found at Asn-253 and Asn-307. Ser-349 acts as the Charge relay system in catalysis. N-linked (GlcNAc...) asparagine glycosylation is present at Asn-367.

The protein belongs to the peptidase S8 family.

Its subcellular location is the secreted. The enzyme catalyses Hydrolysis of proteins with broad specificity, and of Bz-Arg-OEt &gt; Ac-Tyr-OEt. Does not hydrolyze peptide amides.. Its function is as follows. Secreted alkaline protease that allows assimilation of proteinaceous substrates. Acts as a significant virulence factor in invasive aspergillosis. Involved in immune evasion from the human and mice complement systems during infection. Efficiently cleaves important components of the complement cascade such as such as C3, C4, C5, and C1q, as well as IgG, which leads to down-regulation of complement activation at the hyphal surface. The polypeptide is Alkaline protease 1 (alp1) (Aspergillus fumigatus (strain CBS 144.89 / FGSC A1163 / CEA10) (Neosartorya fumigata)).